Here is a 275-residue protein sequence, read N- to C-terminus: Large ribosomal subunit protein uL2 (275 aa).

The tract at residues 208 to 275 (AGAKRWRGRR…NMIIRDRRKK (68 aa)) is disordered. Composition is skewed to basic residues over residues 209–219 (GAKRWRGRRPT) and 254–263 (KGYKTRRNKR).

It belongs to the universal ribosomal protein uL2 family. Part of the 50S ribosomal subunit. Forms a bridge to the 30S subunit in the 70S ribosome.

In terms of biological role, one of the primary rRNA binding proteins. Required for association of the 30S and 50S subunits to form the 70S ribosome, for tRNA binding and peptide bond formation. It has been suggested to have peptidyltransferase activity; this is somewhat controversial. Makes several contacts with the 16S rRNA in the 70S ribosome. This is Large ribosomal subunit protein uL2 from Coxiella burnetii (strain CbuG_Q212) (Coxiella burnetii (strain Q212)).